A 162-amino-acid chain; its full sequence is Ribosome maturation factor RimP (162 aa).

The protein belongs to the RimP family.

The protein localises to the cytoplasm. In terms of biological role, required for maturation of 30S ribosomal subunits. In Cupriavidus metallidurans (strain ATCC 43123 / DSM 2839 / NBRC 102507 / CH34) (Ralstonia metallidurans), this protein is Ribosome maturation factor RimP.